A 612-amino-acid polypeptide reads, in one-letter code: tRNA(Met) cytidine acetyltransferase TmcA (612 aa).

Residues Gln-136, 161-170, and Arg-284 contribute to the ATP site; that span reads GRGKSTLLGQ. Positions 319–499 constitute an N-acetyltransferase domain; that stretch reads KHASELEEAL…PAAIYALPLT (181 aa). Residue 424–426 coordinates acetyl-CoA; sequence IAV.

It belongs to the RNA cytidine acetyltransferase family. TmcA subfamily.

It is found in the cytoplasm. It catalyses the reaction cytidine(34) in elongator tRNA(Met) + acetyl-CoA + ATP + H2O = N(4)-acetylcytidine(34) in elongator tRNA(Met) + ADP + phosphate + CoA + H(+). Catalyzes the formation of N(4)-acetylcytidine (ac(4)C) at the wobble position of tRNA(Met), by using acetyl-CoA as an acetyl donor and ATP (or GTP). The polypeptide is tRNA(Met) cytidine acetyltransferase TmcA (Idiomarina loihiensis (strain ATCC BAA-735 / DSM 15497 / L2-TR)).